Reading from the N-terminus, the 782-residue chain is Cyclic nucleotide-gated channel beta-3 (782 aa).

Disordered stretches follow at residues 1–111 (MFKS…PKSK) and 147–168 (GDIS…PSTQ). Residues 1–213 (MFKSLTIKSN…SIDSYTDRLY (213 aa)) lie on the Cytoplasmic side of the membrane. Basic and acidic residues-rich tracts occupy residues 13-25 (KPRE…KQDP) and 57-73 (EESH…KNSL). Polar residues-rich tracts occupy residues 74-83 (RDLTTNPNHQ) and 152-168 (PEAS…PSTQ). The chain crosses the membrane as a helical span at residues 214–237 (LLWLLLVTIAYNWNCWLIPLRLVF). Residues 238–244 (PYQTPDN) lie on the Extracellular side of the membrane. Residues 245 to 265 (THYWFITDITCDIIYLCDMLL) form a helical membrane-spanning segment. Over 266–294 (IQPRLQFIKGGDIMVDSNELKRHYRSSTK) the chain is Cytoplasmic. Residues 295–312 (FQLDVASVMPFDVFYLFF) traverse the membrane as a helical segment. At 313–315 (GFN) the chain is on the extracellular side. The chain crosses the membrane as a helical span at residues 316 to 330 (PVFRMNRILKYTSFF). At 331–343 (EFNHHLESIMDKA) the chain is on the cytoplasmic side. The interval 343–442 (AYIYRVIRTT…IGQMQDVIGA (100 aa)) is ion conduction pathway. Residues 344 to 366 (YIYRVIRTTGYLLYTLHINACIY) form a helical membrane-spanning segment. Residues 367 to 388 (YWASDYEGIGSTKWVYNGEGNK) lie on the Extracellular side of the membrane. The next 2 membrane-spanning stretches (helical) occupy residues 389-415 (YLRC…SFEI) and 416-440 (VFQL…QDVI). The tract at residues 402–405 (TIGG) is selectivity filter. Over 441-782 (GAATANQNNF…TIEVKEKAKQ (342 aa)) the chain is Cytoplasmic. The segment at 445–521 (ANQNNFRISM…SIISKVELFK (77 aa)) is C-linker. The segment at 525 to 641 (TQMIYDMLLR…LLMKKASVLL (117 aa)) is cyclic nucleotide-binding domain. 3',5'-cyclic GMP contacts are provided by Gly-586, Glu-587, Arg-599, and Thr-600. The disordered stretch occupies residues 692–724 (EQTIQKTSENSEEGGGKRREYEDKEREPSEKIL). Residues 705–724 (GGGKRREYEDKEREPSEKIL) are compositionally biased toward basic and acidic residues.

It belongs to the cyclic nucleotide-gated cation channel (TC 1.A.1.5) family. CNGB3 subfamily. As to quaternary structure, forms heterotetrameric channels composed of CNGA3 and CNGB3 subunits with 3:1 stoichiometry.

The protein resides in the cell membrane. It catalyses the reaction Ca(2+)(in) = Ca(2+)(out). It carries out the reaction Na(+)(in) = Na(+)(out). The catalysed reaction is K(+)(in) = K(+)(out). The enzyme catalyses NH4(+)(in) = NH4(+)(out). It catalyses the reaction Rb(+)(in) = Rb(+)(out). It carries out the reaction Li(+)(in) = Li(+)(out). The catalysed reaction is Cs(+)(in) = Cs(+)(out). Functionally, pore-forming subunit of the cone cyclic nucleotide-gated channel. Mediates cone photoresponses at bright light converting transient changes in intracellular cGMP levels into electrical signals. In the dark, cGMP levels are high and keep the channel open enabling a steady inward current carried by Na(+) and Ca(2+) ions that leads to membrane depolarization and neurotransmitter release from synaptic terminals. Upon photon absorption cGMP levels decline leading to channel closure and membrane hyperpolarization that ultimately slows neurotransmitter release and signals the presence of light, the end point of the phototransduction cascade. Conducts cGMP- and cAMP-gated ion currents, with permeability for monovalent and divalent cations. The protein is Cyclic nucleotide-gated channel beta-3 of Canis lupus familiaris (Dog).